The sequence spans 676 residues: Methionine--tRNA ligase (676 aa).

The 'HIGH' region motif lies at proline 11 to histidine 21. Zn(2+)-binding residues include cysteine 143, cysteine 146, cysteine 156, and cysteine 159. Residues lysine 326–serine 330 carry the 'KMSKS' region motif. Threonine 329 contributes to the ATP binding site. Residues glutamate 581–lysine 676 enclose the tRNA-binding domain.

Belongs to the class-I aminoacyl-tRNA synthetase family. MetG type 1 subfamily. In terms of assembly, homodimer. It depends on Zn(2+) as a cofactor.

The protein resides in the cytoplasm. It carries out the reaction tRNA(Met) + L-methionine + ATP = L-methionyl-tRNA(Met) + AMP + diphosphate. Functionally, is required not only for elongation of protein synthesis but also for the initiation of all mRNA translation through initiator tRNA(fMet) aminoacylation. This chain is Methionine--tRNA ligase, found in Methanosphaera stadtmanae (strain ATCC 43021 / DSM 3091 / JCM 11832 / MCB-3).